The following is an 828-amino-acid chain: Glycerol-3-phosphate acyltransferase 1, mitochondrial (828 aa).

Residues 1–87 (MDESALTLGT…FFNPSIPSLG (87 aa)) lie on the Cytoplasmic side of the membrane. The tract at residues 80 to 120 (NPSIPSLGLRNVIYINETHTRHRGWLARRLSYVLFIQERDV) is important for mitochondrial localization. Residues 88–118 (LRNVIYINETHTRHRGWLARRLSYVLFIQER) lie within the membrane without spanning it. At 119–828 (DVHKGMFATN…LEYILSFVVL (710 aa)) the chain is on the cytoplasmic side. The HXXXXD motif signature appears at 230 to 235 (HRSHID). Residues R278, R279, K288, R293, and R328 each coordinate CoA. Phosphoserine is present on S380. A disordered region spans residues 435–455 (SRPSDAADEGRDTSINESRNA). Residues 442–455 (DEGRDTSINESRNA) are compositionally biased toward basic and acidic residues. R462 is a binding site for CoA. 2 positions are modified to phosphoserine: S688 and S695. N6-acetyllysine occurs at positions 780 and 784.

This sequence belongs to the GPAT/DAPAT family.

The protein resides in the mitochondrion outer membrane. It catalyses the reaction sn-glycerol 3-phosphate + an acyl-CoA = a 1-acyl-sn-glycero-3-phosphate + CoA. The enzyme catalyses (9Z,12Z)-octadecadienoyl-CoA + sn-glycerol 3-phosphate = 1-(9Z,12Z)-octadecadienoyl-sn-glycero-3-phosphate + CoA. It carries out the reaction sn-glycerol 3-phosphate + (9Z)-octadecenoyl-CoA = 1-(9Z-octadecenoyl)-sn-glycero-3-phosphate + CoA. The catalysed reaction is sn-glycerol 3-phosphate + octadecanoyl-CoA = 1-octadecanoyl-sn-glycero-3-phosphate + CoA. It catalyses the reaction sn-glycerol 3-phosphate + hexadecanoyl-CoA = 1-hexadecanoyl-sn-glycero-3-phosphate + CoA. The enzyme catalyses dodecanoyl-CoA + sn-glycerol 3-phosphate = 1-dodecanoyl-sn-glycerol 3-phosphate + CoA. It carries out the reaction 1-acyl-sn-glycero-3-phospho-(1'-sn-glycerol) + an acyl-CoA = a 1,2-diacyl-sn-glycero-3-phospho-(1'-sn-glycerol) + CoA. It participates in phospholipid metabolism; CDP-diacylglycerol biosynthesis; CDP-diacylglycerol from sn-glycerol 3-phosphate: step 1/3. Its function is as follows. Mitochondrial membrane protein that catalyzes the essential first step of biosynthesis of glycerolipids such as triglycerides, phosphatidic acids and lysophosphatidic acids. Esterifies acyl-group from acyl-coenzyme A (acyl-CoA) to the sn-1 position of glycerol-3-phosphate, to produce lysophosphatidic acid. Has a narrow hydrophobic binding cleft that selects for a linear acyl chain. Catalytic activity is higher for substrates with a 16-carbon acyl chain. In Homo sapiens (Human), this protein is Glycerol-3-phosphate acyltransferase 1, mitochondrial.